A 506-amino-acid chain; its full sequence is Glycerol kinase (506 aa).

T11 contributes to the ADP binding site. ATP contacts are provided by T11, S12, and S13. Sn-glycerol 3-phosphate is bound at residue T11. R15 contacts ADP. Sn-glycerol 3-phosphate is bound by residues R81, E82, Y133, and D242. 5 residues coordinate glycerol: R81, E82, Y133, D242, and Q243. Positions 264 and 316 each coordinate ADP. T264, G316, Q320, and G421 together coordinate ATP. ADP is bound by residues G421 and N425.

This sequence belongs to the FGGY kinase family.

It catalyses the reaction glycerol + ATP = sn-glycerol 3-phosphate + ADP + H(+). It functions in the pathway polyol metabolism; glycerol degradation via glycerol kinase pathway; sn-glycerol 3-phosphate from glycerol: step 1/1. With respect to regulation, inhibited by fructose 1,6-bisphosphate (FBP). Key enzyme in the regulation of glycerol uptake and metabolism. Catalyzes the phosphorylation of glycerol to yield sn-glycerol 3-phosphate. This is Glycerol kinase from Paracidovorax citrulli (strain AAC00-1) (Acidovorax citrulli).